The following is a 351-amino-acid chain: UDP-N-acetylglucosamine--N-acetylmuramyl-(pentapeptide) pyrophosphoryl-undecaprenol N-acetylglucosamine transferase (351 aa).

UDP-N-acetyl-alpha-D-glucosamine-binding positions include 13 to 15 (TGG), Asn-125, Arg-161, Ser-189, Ile-241, 260 to 265 (ALTVCE), and Gln-285.

Belongs to the glycosyltransferase 28 family. MurG subfamily.

The protein localises to the cell inner membrane. The enzyme catalyses di-trans,octa-cis-undecaprenyl diphospho-N-acetyl-alpha-D-muramoyl-L-alanyl-D-glutamyl-meso-2,6-diaminopimeloyl-D-alanyl-D-alanine + UDP-N-acetyl-alpha-D-glucosamine = di-trans,octa-cis-undecaprenyl diphospho-[N-acetyl-alpha-D-glucosaminyl-(1-&gt;4)]-N-acetyl-alpha-D-muramoyl-L-alanyl-D-glutamyl-meso-2,6-diaminopimeloyl-D-alanyl-D-alanine + UDP + H(+). It participates in cell wall biogenesis; peptidoglycan biosynthesis. Functionally, cell wall formation. Catalyzes the transfer of a GlcNAc subunit on undecaprenyl-pyrophosphoryl-MurNAc-pentapeptide (lipid intermediate I) to form undecaprenyl-pyrophosphoryl-MurNAc-(pentapeptide)GlcNAc (lipid intermediate II). The protein is UDP-N-acetylglucosamine--N-acetylmuramyl-(pentapeptide) pyrophosphoryl-undecaprenol N-acetylglucosamine transferase of Haemophilus influenzae (strain 86-028NP).